Reading from the N-terminus, the 433-residue chain is MTIKNSFLEYRMTELTQQIEKSTWHSKFAALGPGILMASAAVGGSHIIASTQSGAIYGWQLAIIIILANLFKYPFFRFGVQYTLDSGETLLQGYLRKGKLYIWIFFLLNVFATVINTAAVGLLCAAILTFVLPVQVPVPTLSFIVIGVSTSILLLGKYRLLDGLSKLIMIALTITTVSAVIIALARNGIQGVAPADYVSASPWNLAALGFIVALMGWMPAPIEISAINSMWVIAKRRVSKVSYQDGIWDFNVGYIGTAILALVFLALGALVQHGSSETVQLVGGKYIAQLINMYASTIGEWARGLIAFIAFMCMFGTTITVIDGYSRTNVESLRLILGKKESRPSYLNVAITFAALAGLAIIFYFNNAVGPMLKFAMIASFVSTPVFAYLNLSLVLKGEHRVKGKLLWLSLIGLMYLTSFTLLFIAQQAGWLN.

The next 11 helical transmembrane spans lie at Phe28–Ile48, Ile56–Phe76, Ile102–Leu122, Ala126–Ile146, Leu164–Leu184, Ala207–Ile227, Phe250–Leu270, Gly304–Gly324, Ser345–Phe365, Phe375–Val395, and Leu406–Ala426.

The protein localises to the cell membrane. This is an uncharacterized protein from Pasteurella multocida (strain Pm70).